We begin with the raw amino-acid sequence, 130 residues long: MAIQANMTVGRRKEAVARVRLVPGTGNITINGRSMDEYFGRETSKMILVEPLKLVDQMGKLDVFVNAAGGGLSGQAGAIRHGISRALVELNPEYRPVLKKAGFMTRDARAVERKKYGRPGARKRFQFSKR.

It belongs to the universal ribosomal protein uS9 family.

The chain is Small ribosomal subunit protein uS9 from Anaeromyxobacter dehalogenans (strain 2CP-1 / ATCC BAA-258).